The following is an 800-amino-acid chain: N,N'-diacetylchitobiose phosphorylase (800 aa).

N-acetyl-alpha-D-glucosamine 1-phosphate-binding residues include Arg-333, Arg-343, Arg-349, Asp-350, Trp-490, and Asp-492. The active-site Proton donor is Asp-492. The N-acetyl-D-glucosamine site is built by Asp-492, Lys-636, and Glu-637. N-acetyl-alpha-D-glucosamine 1-phosphate is bound by residues Glu-637, His-644, Gln-690, Thr-709, and Gly-710.

It belongs to the glycosyl hydrolase 94 family. In terms of assembly, homodimer.

It catalyses the reaction N,N'-diacetylchitobiose + phosphate = N-acetyl-alpha-D-glucosamine 1-phosphate + N-acetyl-D-glucosamine. In terms of biological role, catalyzes the reversible phosphorolysis of chitobiose (N,N'-diacetylchitobiose or (GlcNAc)(2)) into N-acetyl-alpha-D-glucosamine 1-phosphate (GlcNAc-1-P) and N-acetyl-D-glucosamine (GlcNAc) with inversion of the anomeric configuration. This chain is N,N'-diacetylchitobiose phosphorylase, found in Vibrio furnissii.